A 281-amino-acid polypeptide reads, in one-letter code: 2-dehydro-3-deoxyphosphooctonate aldolase (281 aa).

Belongs to the KdsA family.

The protein resides in the cytoplasm. It catalyses the reaction D-arabinose 5-phosphate + phosphoenolpyruvate + H2O = 3-deoxy-alpha-D-manno-2-octulosonate-8-phosphate + phosphate. Its pathway is carbohydrate biosynthesis; 3-deoxy-D-manno-octulosonate biosynthesis; 3-deoxy-D-manno-octulosonate from D-ribulose 5-phosphate: step 2/3. It participates in bacterial outer membrane biogenesis; lipopolysaccharide biosynthesis. This chain is 2-dehydro-3-deoxyphosphooctonate aldolase, found in Stutzerimonas stutzeri (strain A1501) (Pseudomonas stutzeri).